The primary structure comprises 497 residues: Penton protein (497 aa).

A Cell attachment site motif is present at residues 293–295; sequence RGD.

This sequence belongs to the adenoviridae penton family. Interacts (via the cell attachment site RGD) with host heterodimer ITGAV-ITGB5; this interaction promotes virus internalization. Interacts with host WWP1 and WWP2. Interacts with the fiber protein (via N-terminal tail region). Interacts with the capsid vertex protein; this interaction binds the penton base to neighboring peripentonal hexons.

It is found in the virion. It localises to the host nucleus. Its function is as follows. Major capsid protein that self-associates to form penton base pentamers, each in the shape of a pentagon, situated at the 12 vertices of the pseudo T=25 capsid. Involved in virus secondary attachment to host cell after initial attachment by the fiber protein. Binds host integrin heterodimer ITGAV-ITGB5 (alphaV-beta5) thereby triggering clathrin-mediated endocytosis of virions. Mediates initial virus attachment to CXADR-negative cells. Binding to integrins ITGAV-ITGB5 also seems to induce macropinocytosis uptake of the virus. As the virus enters the host cell, penton proteins are shed concomitant with virion acidification in the endosome. This chain is Penton protein, found in Human adenovirus A serotype 12 (HAdV-12).